A 233-amino-acid polypeptide reads, in one-letter code: Orotidine 5'-phosphate decarboxylase (233 aa).

Substrate-binding positions include Asp11, Lys34, Asp61–Thr70, Thr117, Arg179, Gln188, Gly208, and Arg209. Catalysis depends on Lys63, which acts as the Proton donor.

It belongs to the OMP decarboxylase family. Type 1 subfamily. In terms of assembly, homodimer.

The enzyme catalyses orotidine 5'-phosphate + H(+) = UMP + CO2. The protein operates within pyrimidine metabolism; UMP biosynthesis via de novo pathway; UMP from orotate: step 2/2. Its function is as follows. Catalyzes the decarboxylation of orotidine 5'-monophosphate (OMP) to uridine 5'-monophosphate (UMP). In Streptococcus pneumoniae (strain CGSP14), this protein is Orotidine 5'-phosphate decarboxylase.